We begin with the raw amino-acid sequence, 62 residues long: LTCLICPEKYCNKVHTCLNGENICFKRFNRILGKRYDLGCAATCPTVKTGIVQCCSTDKCNH.

5 disulfides stabilise this stretch: C3/C24, C6/C11, C17/C40, C44/C54, and C55/C60.

It belongs to the three-finger toxin family. Ancestral subfamily. Orphan group II sub-subfamily. In terms of tissue distribution, expressed by the venom gland.

Its subcellular location is the secreted. Functionally, binds with low affinity to muscular (alpha-1-beta-1-delta-epsilon/CHRNA1-CHRNB1-CHRND-CHRNE) and very low affinity to neuronal (alpha-7/CHRNA7) nicotinic acetylcholine receptor (nAChR). This Naja naja (Indian cobra) protein is Weak neurotoxin 5.